The chain runs to 330 residues: Transcription factor TGA6 (330 aa).

A compositionally biased stretch (polar residues) spans 1–13 (MADTSSRTDVSTD). The tract at residues 1–45 (MADTSSRTDVSTDGDTDHRDLGSDRGHMHAAASDSSDRSKDKLDQ) is disordered. 2 stretches are compositionally biased toward basic and acidic residues: residues 15–27 (DTDH…DRGH) and 35–45 (SSDRSKDKLDQ). In terms of domain architecture, bZIP spans 44–107 (DQKTLRRLAQ…SSGDQAHSTG (64 aa)). 2 coiled-coil regions span residues 45–142 (QKTL…HAGD) and 217–233 (INSL…ALSQ). Residues 46-66 (KTLRRLAQNREAARKSRLRKK) form a basic motif region. Residues 72–86 (LENSRLKLTQLEQEL) are leucine-zipper. A DOG1 domain is found at 111–327 (ALAFDAEHSR…RALSSLWLAR (217 aa)).

It belongs to the bZIP family. As to quaternary structure, binds DNA as a dimer. Interacts with NPR1, NPR3 and NPR4. Interacts with GRXC9/GRX480. In terms of tissue distribution, expressed predominantly in roots and flowers.

The protein resides in the nucleus. In terms of biological role, transcriptional activator that binds specifically to the DNA sequence 5'-TGACG-3'. Recognizes ocs elements like the as-1 motif of the cauliflower mosaic virus 35S promoter. Binding to the as-1-like cis elements mediate auxin- and salicylic acid-inducible transcription. May be involved in the induction of the systemic acquired resistance (SAR) via its interaction with NPR1. Could also bind to the Hex-motif (5'-TGACGTGG-3') another cis-acting element found in plant histone promoters. The chain is Transcription factor TGA6 (TGA6) from Arabidopsis thaliana (Mouse-ear cress).